Consider the following 109-residue polypeptide: Encapsulin nanocompartment cargo protein EncD (109 aa).

Fe cation is bound at residue glutamate 47. Residues 61-94 (AGGRGAAAPTPAREAPAEAPRLARGSADELHEAA) form a disordered region. The span at 66-85 (AAAPTPAREAPAEAPRLARG) shows a compositional bias: low complexity. Residues 100-106 (LTVGSLR) form a probable targeting peptide region.

It localises to the encapsulin nanocompartment. Cargo protein of a type 1 encapsulin nanocompartment. May help nucleate Fe atoms in the interior of the encapsulin nanocompartment. Present in about 47 copies/encapsulin nanocompartment. This is Encapsulin nanocompartment cargo protein EncD from Myxococcus xanthus (strain DK1622).